We begin with the raw amino-acid sequence, 114 residues long: Replication initiation control protein YabA (114 aa).

Zn(2+)-binding residues include H79, C81, C95, and C98.

It belongs to the YabA family. In terms of assembly, homotetramer. Interacts with both DnaA and DnaN, acting as a bridge between these two proteins. Zn(2+) is required as a cofactor.

It is found in the cytoplasm. The protein localises to the nucleoid. Its function is as follows. Involved in control of chromosome replication initiation. Inhibits the cooperative binding of DnaA to the oriC region, thus negatively regulating initiation of chromosome replication. Inhibits the ability of DnaA-ATP to form a helix on DNA; does not disassemble preformed DnaA-DNA helices. Decreases the residence time of DnaA on the chromosome at its binding sites (oriC, replication forks and promoter-binding sites). Tethers DnaA to the replication machinery via the DNA polymerase beta sliding clamp subunit (dnaN). Associates with oriC and other DnaA targets on the chromosome in a DnaA-dependent manner. The sequence is that of Replication initiation control protein YabA from Lactobacillus johnsonii (strain CNCM I-12250 / La1 / NCC 533).